A 166-amino-acid polypeptide reads, in one-letter code: Thiol peroxidase (166 aa).

The 149-residue stretch at 18–166 (LKVGDKAPDV…NYEALLKVLK (149 aa)) folds into the Thioredoxin domain. Cys60 acts as the Cysteine sulfenic acid (-SOH) intermediate in catalysis. Cys60 and Cys94 are joined by a disulfide.

Belongs to the peroxiredoxin family. Tpx subfamily. Homodimer.

The enzyme catalyses a hydroperoxide + [thioredoxin]-dithiol = an alcohol + [thioredoxin]-disulfide + H2O. Its function is as follows. Thiol-specific peroxidase that catalyzes the reduction of hydrogen peroxide and organic hydroperoxides to water and alcohols, respectively. Plays a role in cell protection against oxidative stress by detoxifying peroxides. This Helicobacter pylori (strain J99 / ATCC 700824) (Campylobacter pylori J99) protein is Thiol peroxidase.